Here is a 1080-residue protein sequence, read N- to C-terminus: Presequence protease 2, chloroplastic/mitochondrial (1080 aa).

The N-terminal 84 residues, methionine 1–arginine 84, are a transit peptide targeting the chloroplast and mitochondrion. Zn(2+) is bound at residue histidine 161. Catalysis depends on glutamate 164, which acts as the Proton acceptor. Zn(2+) is bound at residue histidine 165. Residue glutamate 239 is part of the active site. Residue glutamate 261 coordinates Zn(2+). Arginine 704 is a Mg(2+) binding site.

The protein belongs to the peptidase M16 family. PreP subfamily. In terms of assembly, homodimer. Requires Zn(2+) as cofactor. Mg(2+) is required as a cofactor. In terms of tissue distribution, expressed in leaves, flowers and roots, but not detected in siliques and shoots.

Its subcellular location is the plastid. The protein resides in the chloroplast stroma. It localises to the mitochondrion matrix. Completely inhibited by the metal chelator orthophenanthroline. ATP-independent protease that degrades both mitochondrial and chloroplastic transit peptides after their cleavage. Also degrades other unstructured peptides. Specific for peptides in the range of 10 to 65 residues. Shows a preference for cleavage after small polar residues and before basic residues, but without any positional preference. The chain is Presequence protease 2, chloroplastic/mitochondrial (PREP2) from Arabidopsis thaliana (Mouse-ear cress).